The chain runs to 362 residues: Peptide chain release factor 1 (362 aa).

Gln-237 bears the N5-methylglutamine mark. Residues 285–295 show a composition bias toward basic and acidic residues; the sequence is EEKRHAEEAST. A disordered region spans residues 285–311; the sequence is EEKRHAEEASTRRNLLGSGDRSDRIRT.

It belongs to the prokaryotic/mitochondrial release factor family. Methylated by PrmC. Methylation increases the termination efficiency of RF1.

It localises to the cytoplasm. Its function is as follows. Peptide chain release factor 1 directs the termination of translation in response to the peptide chain termination codons UAG and UAA. This chain is Peptide chain release factor 1, found in Photobacterium profundum (strain SS9).